We begin with the raw amino-acid sequence, 402 residues long: Beta-ketoacyl-[acyl-carrier-protein] synthase III B, chloroplastic (402 aa).

Catalysis depends on residues C178, H328, and N358.

The protein belongs to the thiolase-like superfamily. FabH family.

The protein localises to the plastid. Its subcellular location is the chloroplast. The enzyme catalyses malonyl-[ACP] + acetyl-CoA + H(+) = 3-oxobutanoyl-[ACP] + CO2 + CoA. Its pathway is lipid metabolism; fatty acid biosynthesis. Functionally, catalyzes the condensation reaction of fatty acid synthesis by the addition to an acyl acceptor of two carbons from malonyl-ACP. KAS III catalyzes the first condensation reaction which initiates fatty acid synthesis and may therefore play a role in governing the total rate of fatty acid production. Possesses both acetoacetyl-ACP synthase and acetyl transacylase activities. This Cuphea wrightii (Wright's waxweed) protein is Beta-ketoacyl-[acyl-carrier-protein] synthase III B, chloroplastic (KAS3B).